Here is a 614-residue protein sequence, read N- to C-terminus: Probable indole-3-acetic acid-amido synthetase GH3.2 (614 aa).

It belongs to the IAA-amido conjugating enzyme family. As to expression, expressed in roots, flowers and callus.

Its function is as follows. May catalyze the synthesis of indole-3-acetic acid (IAA)-amino acid conjugates, providing a mechanism for the plant to cope with the presence of excess auxin. The sequence is that of Probable indole-3-acetic acid-amido synthetase GH3.2 (GH3.2) from Oryza sativa subsp. japonica (Rice).